A 239-amino-acid chain; its full sequence is Small ribosomal subunit protein eS6B (239 aa).

Serine 148, serine 235, and serine 236 each carry phosphoserine.

Belongs to the eukaryotic ribosomal protein eS6 family. Component of the small ribosomal subunit (SSU). Mature yeast ribosomes consist of a small (40S) and a large (60S) subunit. The 40S small subunit contains 1 molecule of ribosomal RNA (18S rRNA) and at least 33 different proteins. The large 60S subunit contains 3 rRNA molecules (25S, 5.8S and 5S rRNA) and at least 46 different proteins. Interacts with snoRNA U3. uS11 interacts with MPP10. Component of the ribosomal small subunit (SSU) processome composed of at least 40 protein subunits and snoRNA U3.

It localises to the cytoplasm. In terms of biological role, component of the ribosome, a large ribonucleoprotein complex responsible for the synthesis of proteins in the cell. The small ribosomal subunit (SSU) binds messenger RNAs (mRNAs) and translates the encoded message by selecting cognate aminoacyl-transfer RNA (tRNA) molecules. The large subunit (LSU) contains the ribosomal catalytic site termed the peptidyl transferase center (PTC), which catalyzes the formation of peptide bonds, thereby polymerizing the amino acids delivered by tRNAs into a polypeptide chain. The nascent polypeptides leave the ribosome through a tunnel in the LSU and interact with protein factors that function in enzymatic processing, targeting, and the membrane insertion of nascent chains at the exit of the ribosomal tunnel. eS6 is involved in nucleolar processing of pre-18S ribosomal RNA and ribosome assembly. The polypeptide is Small ribosomal subunit protein eS6B (rps602) (Schizosaccharomyces pombe (strain 972 / ATCC 24843) (Fission yeast)).